A 1037-amino-acid chain; its full sequence is Sentrin-specific protease 7 (1037 aa).

A compositionally biased stretch (basic residues) spans 1–10; it reads MDRARPGRRR. Disordered stretches follow at residues 1 to 27 and 185 to 399; these read MDRA…SSPA and SDTA…ENSS. Phosphoserine occurs at positions 12, 13, and 25. Residues 192–208 show a composition bias toward low complexity; it reads SEQLSSSSDGSLESCQS. Over residues 272–282 the composition is skewed to polar residues; it reads GTSNKNTSYSY. Residues 290-300 show a composition bias toward basic residues; that stretch reads VSRKRKKRGRS. Composition is skewed to basic and acidic residues over residues 301–321 and 328–341; these read NFHD…HTKE and VSRK…DSHQ. The segment covering 379-399 has biased composition (low complexity); that stretch reads ASSPNKSLESSASSEVSENSS. A phosphoserine mark is found at Ser-434 and Ser-435. The tract at residues 747 to 1037 is protease; it reads LGVTNEDLEC…HLQQQKGGSC (291 aa). The active site involves His-847. Positions 873–909 are disordered; it reads QFQGQQSQHDHKMTDNDPHTTSTVSTSAEDSQSTEVN. Residues 880–890 show a composition bias toward basic and acidic residues; the sequence is QHDHKMTDNDP. A compositionally biased stretch (polar residues) spans 891–909; it reads HTTSTVSTSAEDSQSTEVN. Asp-926 is an active-site residue. Cys-979 functions as the Nucleophile in the catalytic mechanism.

The protein belongs to the peptidase C48 family.

The protein localises to the cytoplasm. Protease that acts as a positive regulator of the cGAS-STING pathway by catalyzing desumoylation of CGAS. Desumoylation of CGAS promotes DNA-binding activity of CGAS, subsequent oligomerization and activation. Deconjugates SUMO2 and SUMO3 from targeted proteins, but not SUMO1. Catalyzes the deconjugation of poly-SUMO2 and poly-SUMO3 chains. Has very low efficiency in processing full-length SUMO proteins to their mature forms. This Mus musculus (Mouse) protein is Sentrin-specific protease 7.